The chain runs to 530 residues: Sugar transport protein MST6 (530 aa).

At 1–18 (MAGGVVVNNGGGKDYPGK) the chain is on the cytoplasmic side. A helical membrane pass occupies residues 19-39 (LTMFVLFACIVAATGGLIFGY). The Extracellular segment spans residues 40–81 (DIGISGGVTSMNPFLIKFFPSVYRKEQAAEKNQSNQYCKFDS). Residues 82-102 (PLLTMFTSSLYLAALVASFFA) traverse the membrane as a helical segment. The Cytoplasmic segment spans residues 103–119 (STVTRVAGRKWSMFGGG). Residues 120 to 140 (VTFLVGAALNGAAKNVLMLIL) traverse the membrane as a helical segment. Over 141–142 (GR) the chain is Extracellular. A helical transmembrane segment spans residues 143–163 (VLLGVGVGFANQSVPLYLSEM). Topologically, residues 164–169 (APARLR) are cytoplasmic. Residues 170–190 (GMLNIGFQLMITIGILCANLI) form a helical membrane-spanning segment. Over 191–204 (NYGTAKIKGGWGWR) the chain is Extracellular. Residues 205–225 (VSLALAAVPAAIIAVGALFLP) form a helical membrane-spanning segment. At 226–291 (DTPNSLIDRG…YRPQLTMAIA (66 aa)) the chain is on the cytoplasmic side. Residues 292–312 (IPLFQQLTGINVIMFYAPVLF) form a helical membrane-spanning segment. The Extracellular portion of the chain corresponds to 313-323 (KTLGFADDASL). Residues 324 to 344 (MSAVITGLVNVFATFVSIVTV) form a helical membrane-spanning segment. At 345–359 (DRLGRRKLFLQGGTQ) the chain is on the cytoplasmic side. A helical transmembrane segment spans residues 360–380 (MLACQIVVGSLIGAKFGFSGV). Residues 381-388 (ADIPKAYA) are Extracellular-facing. Residues 389–409 (AFVVLFICAYVAGFAWSWGPL) traverse the membrane as a helical segment. Residues 410 to 428 (GWLVPSEIFPLEIRSAGQS) are Cytoplasmic-facing. Residues 429 to 449 (INVSVNMLFTFIIAQAFLPML) form a helical membrane-spanning segment. Residues 450 to 453 (CRFK) lie on the Extracellular side of the membrane. The helical transmembrane segment at 454–474 (FILFFFFGAWVVIMTLFVAFF) threads the bilayer. The Cytoplasmic segment spans residues 475 to 530 (LPETKNVPIEEMVLVWKSHWYWGRFIRDEDVHVGADVEMPAAGNRNGKVDPAKLAN).

Belongs to the major facilitator superfamily. Sugar transporter (TC 2.A.1.1) family. In terms of tissue distribution, expressed in leaf blades, leaf sheaths, anthers, ovaries and embryos. Expressed at low levels in roots and shoots.

It is found in the cell membrane. Mediates active uptake of hexoses by sugar:proton symport. Can transport glucose, fructose, mannose, galactose, xylose and ribose. The chain is Sugar transport protein MST6 from Oryza sativa subsp. japonica (Rice).